Reading from the N-terminus, the 36-residue chain is Photosystem II reaction center protein M (36 aa).

The chain crosses the membrane as a helical span at residues 5–25 (ILGVIAVALFILIPTSFLLIL).

Belongs to the PsbM family. PSII is composed of 1 copy each of membrane proteins PsbA, PsbB, PsbC, PsbD, PsbE, PsbF, PsbH, PsbI, PsbJ, PsbK, PsbL, PsbM, PsbT, PsbY, PsbZ, Psb30/Ycf12, at least 3 peripheral proteins of the oxygen-evolving complex and a large number of cofactors. It forms dimeric complexes.

Its subcellular location is the plastid. The protein resides in the chloroplast thylakoid membrane. Functionally, one of the components of the core complex of photosystem II (PSII). PSII is a light-driven water:plastoquinone oxidoreductase that uses light energy to abstract electrons from H(2)O, generating O(2) and a proton gradient subsequently used for ATP formation. It consists of a core antenna complex that captures photons, and an electron transfer chain that converts photonic excitation into a charge separation. This subunit is found at the monomer-monomer interface. The protein is Photosystem II reaction center protein M of Bigelowiella natans (Pedinomonas minutissima).